The following is a 271-amino-acid chain: Cyclic AMP-dependent transcription factor ATF-1 (271 aa).

A disordered region spans residues 1–61 (MEDSHKSTTS…QKAHGILARR (61 aa)). Residues 31 to 90 (QVSSLSESEESQDSSDSIGSSQKAHGILARRPSYRKILKDLSSEDTRGRKGDGENSGVSA) form the KID domain. Position 63 is a phosphoserine; by CaMK1, CDK3, RPS6KA4 and RPS6KA5 (Ser-63). Ser-198 carries the phosphoserine; by HIPK2 modification. Residues Lys-208 and Lys-215 each participate in a glycyl lysine isopeptide (Lys-Gly) (interchain with G-Cter in SUMO2) cross-link. Residues 213–271 (QLKREIRLMKNREAARECRRKKKEYVKCLENRVAVLENQNKTLIEELKTLKDLYSNKSV) enclose the bZIP domain. Residues 215 to 239 (KREIRLMKNREAARECRRKKKEYVK) are basic motif. Residues 241–262 (LENRVAVLENQNKTLIEELKTL) form a leucine-zipper region.

Belongs to the bZIP family. ATF subfamily. In terms of assembly, binds DNA as a dimer. Interacts with HIPK2 and CDK3. Interacts with MOTS-c, a peptide produced by the mitochondrially encoded 12S rRNA MT-RNR1; the interaction occurs in the nucleus following metabolic stress. In terms of processing, phosphorylated at Ser-198 by HIPK2 in response to genotoxic stress. This phosphorylation promotes transcription repression of FTH1 and other antioxidant detoxification genes. The CDK3-mediated phosphorylation at Ser-63 promotes its transactivation and transcriptional activities. Phosphorylated at Ser-63 by RPS6KA4 and RPS6KA5 in response to mitogenic or stress stimuli.

The protein resides in the nucleus. This protein binds the cAMP response element (CRE) (consensus: 5'-GTGACGT[AC][AG]-3'), a sequence present in many viral and cellular promoters. Binds to the Tax-responsive element (TRE) of HTLV-I. Mediates PKA-induced stimulation of CRE-reporter genes. Represses the expression of FTH1 and other antioxidant detoxification genes. Triggers cell proliferation and transformation. The sequence is that of Cyclic AMP-dependent transcription factor ATF-1 (ATF1) from Homo sapiens (Human).